A 572-amino-acid polypeptide reads, in one-letter code: Methionine--tRNA ligase (572 aa).

A 'HIGH' region motif is present at residues 11-21 (PYINGIKHLGN). 4 residues coordinate Zn(2+): C143, C146, C156, and C159. The 'KMSKS' region motif lies at 346–350 (QFSTS). T349 serves as a coordination point for ATP.

The protein belongs to the class-I aminoacyl-tRNA synthetase family. MetG type 1 subfamily. Monomer. Requires Zn(2+) as cofactor.

The protein resides in the cytoplasm. The enzyme catalyses tRNA(Met) + L-methionine + ATP = L-methionyl-tRNA(Met) + AMP + diphosphate. In terms of biological role, is required not only for elongation of protein synthesis but also for the initiation of all mRNA translation through initiator tRNA(fMet) aminoacylation. This Paracoccus denitrificans (strain Pd 1222) protein is Methionine--tRNA ligase.